The following is a 95-amino-acid chain: Co-chaperonin GroES (95 aa).

Basic and acidic residues predominate over residues 12–22 (VKPSPAEEKTK). The tract at residues 12–38 (VKPSPAEEKTKGGLYIPDSGKEKPQHG) is disordered.

Belongs to the GroES chaperonin family. As to quaternary structure, heptamer of 7 subunits arranged in a ring. Interacts with the chaperonin GroEL.

The protein localises to the cytoplasm. In terms of biological role, together with the chaperonin GroEL, plays an essential role in assisting protein folding. The GroEL-GroES system forms a nano-cage that allows encapsulation of the non-native substrate proteins and provides a physical environment optimized to promote and accelerate protein folding. GroES binds to the apical surface of the GroEL ring, thereby capping the opening of the GroEL channel. This is Co-chaperonin GroES from Chloroherpeton thalassium (strain ATCC 35110 / GB-78).